We begin with the raw amino-acid sequence, 192 residues long: Phosphoheptose isomerase (192 aa).

The region spanning 35-192 is the SIS domain; that stretch reads LIETLENQGK…CIERHFAHKN (158 aa). 50-52 is a substrate binding site; sequence NGG. Zn(2+) is bound by residues H59 and E63. Substrate contacts are provided by residues E63, 92–93, 118–120, S123, and Q170; these read ND and STS. Residues Q170 and H178 each coordinate Zn(2+).

It belongs to the SIS family. GmhA subfamily. Homotetramer. Zn(2+) is required as a cofactor.

It localises to the cytoplasm. It carries out the reaction 2 D-sedoheptulose 7-phosphate = D-glycero-alpha-D-manno-heptose 7-phosphate + D-glycero-beta-D-manno-heptose 7-phosphate. It participates in carbohydrate biosynthesis; D-glycero-D-manno-heptose 7-phosphate biosynthesis; D-glycero-alpha-D-manno-heptose 7-phosphate and D-glycero-beta-D-manno-heptose 7-phosphate from sedoheptulose 7-phosphate: step 1/1. Its function is as follows. Catalyzes the isomerization of sedoheptulose 7-phosphate in D-glycero-D-manno-heptose 7-phosphate. This is Phosphoheptose isomerase from Helicobacter pylori (strain HPAG1).